We begin with the raw amino-acid sequence, 125 residues long: Large ribosomal subunit protein bL12 (125 aa).

It belongs to the bacterial ribosomal protein bL12 family. In terms of assembly, homodimer. Part of the ribosomal stalk of the 50S ribosomal subunit. Forms a multimeric L10(L12)X complex, where L10 forms an elongated spine to which 2 to 4 L12 dimers bind in a sequential fashion. Binds GTP-bound translation factors.

Its function is as follows. Forms part of the ribosomal stalk which helps the ribosome interact with GTP-bound translation factors. Is thus essential for accurate translation. This Parabacteroides distasonis (strain ATCC 8503 / DSM 20701 / CIP 104284 / JCM 5825 / NCTC 11152) protein is Large ribosomal subunit protein bL12.